Reading from the N-terminus, the 483-residue chain is Altronate oxidoreductase (483 aa).

NAD(+) is bound at residue Ile18–Ala29.

It belongs to the mannitol dehydrogenase family. UxaB subfamily.

The enzyme catalyses D-altronate + NAD(+) = keto-D-tagaturonate + NADH + H(+). It participates in carbohydrate metabolism; pentose and glucuronate interconversion. In Klebsiella pneumoniae (strain 342), this protein is Altronate oxidoreductase.